The following is a 133-amino-acid chain: Helix-loop-helix protein 1 (133 aa).

The disordered stretch occupies residues 1–79 (MMLNSDTMEL…RRATAKYRTA (79 aa)). Over residues 25–45 (DCGGGAGPDGAGPGGPGGGQA) the composition is skewed to gly residues. Basic and acidic residues predominate over residues 52 to 65 (EPGRKDLQHLSREE). The span at 66–79 (RRRRRRATAKYRTA) shows a compositional bias: basic residues. Positions 75 to 127 (KYRTAHATRERIRVEAFNLAFAELRKLLPTLPPDKKLSKIEILRLAICYISYL) constitute a bHLH domain.

Efficient DNA binding requires dimerization with another bHLH protein.

Its subcellular location is the nucleus. May serve as DNA-binding protein and may be involved in the control of cell-type determination, possibly within the developing nervous system. The polypeptide is Helix-loop-helix protein 1 (NHLH1) (Homo sapiens (Human)).